A 455-amino-acid polypeptide reads, in one-letter code: Exodeoxyribonuclease 7 large subunit (455 aa).

The protein belongs to the XseA family. As to quaternary structure, heterooligomer composed of large and small subunits.

Its subcellular location is the cytoplasm. The enzyme catalyses Exonucleolytic cleavage in either 5'- to 3'- or 3'- to 5'-direction to yield nucleoside 5'-phosphates.. Functionally, bidirectionally degrades single-stranded DNA into large acid-insoluble oligonucleotides, which are then degraded further into small acid-soluble oligonucleotides. This is Exodeoxyribonuclease 7 large subunit from Escherichia fergusonii (strain ATCC 35469 / DSM 13698 / CCUG 18766 / IAM 14443 / JCM 21226 / LMG 7866 / NBRC 102419 / NCTC 12128 / CDC 0568-73).